The primary structure comprises 407 residues: tRNA N6-adenosine threonylcarbamoyltransferase, mitochondrial (407 aa).

A mitochondrion-targeting transit peptide spans 1–30 (MISIKGTGRFLLDNYRIWQRRAFNRPIQLR). A divalent metal cation is bound by residues histidine 145 and histidine 149. Residues 170 to 174 (LVSGG), aspartate 203, alanine 217, glutamate 221, 328 to 329 (SN), and serine 360 contribute to the substrate site. Aspartate 361 contributes to the a divalent metal cation binding site.

Belongs to the KAE1 / TsaD family. Homodimer. A divalent metal cation serves as cofactor.

The protein localises to the mitochondrion. It catalyses the reaction L-threonylcarbamoyladenylate + adenosine(37) in tRNA = N(6)-L-threonylcarbamoyladenosine(37) in tRNA + AMP + H(+). Required for the formation of a threonylcarbamoyl group on adenosine at position 37 (t(6)A37) in mitochondrial tRNAs that read codons beginning with adenine. Probably involved in the transfer of the threonylcarbamoyl moiety of threonylcarbamoyl-AMP (TC-AMP) to the N6 group of A37. Involved in mitochondrial genome maintenance. This chain is tRNA N6-adenosine threonylcarbamoyltransferase, mitochondrial (QRI7), found in Saccharomyces cerevisiae (strain ATCC 204508 / S288c) (Baker's yeast).